The chain runs to 227 residues: Cytidylate kinase (227 aa).

12 to 20 (GPSGAGKGT) lines the ATP pocket.

The protein belongs to the cytidylate kinase family. Type 1 subfamily.

Its subcellular location is the cytoplasm. It carries out the reaction CMP + ATP = CDP + ADP. It catalyses the reaction dCMP + ATP = dCDP + ADP. This is Cytidylate kinase from Xanthomonas euvesicatoria pv. vesicatoria (strain 85-10) (Xanthomonas campestris pv. vesicatoria).